Here is a 1130-residue protein sequence, read N- to C-terminus: Putative protein tag-278 (1130 aa).

Disordered stretches follow at residues M1–N92, V104–R129, and N974–F1130. Coiled coils occupy residues A121 to K779 and E805 to K1061. The span at R983–H993 shows a compositional bias: basic and acidic residues. Positions S999–S1011 are enriched in polar residues. Basic and acidic residues-rich tracts occupy residues M1013–P1057 and R1068–N1081. The segment covering L1082–S1095 has biased composition (low complexity). Residues T1116–F1130 show a composition bias toward basic and acidic residues.

The protein is Putative protein tag-278 (tag-278) of Caenorhabditis elegans.